Consider the following 182-residue polypeptide: Isopentenyl-diphosphate Delta-isomerase (182 aa).

2 residues coordinate Mn(2+): histidine 23 and histidine 30. The 135-residue stretch at 28-162 (PRHLAFSCHV…PWAFSPWLVE (135 aa)) folds into the Nudix hydrolase domain. Residue cysteine 65 is part of the active site. Cysteine 65 is a Mg(2+) binding site. A Mn(2+)-binding site is contributed by histidine 67. A Mg(2+)-binding site is contributed by glutamate 85. Residues glutamate 112 and glutamate 114 each coordinate Mn(2+). Glutamate 114 is a catalytic residue.

Belongs to the IPP isomerase type 1 family. Mg(2+) is required as a cofactor. The cofactor is Mn(2+).

Its subcellular location is the cytoplasm. It catalyses the reaction isopentenyl diphosphate = dimethylallyl diphosphate. The protein operates within isoprenoid biosynthesis; dimethylallyl diphosphate biosynthesis; dimethylallyl diphosphate from isopentenyl diphosphate: step 1/1. In terms of biological role, catalyzes the 1,3-allylic rearrangement of the homoallylic substrate isopentenyl (IPP) to its highly electrophilic allylic isomer, dimethylallyl diphosphate (DMAPP). This is Isopentenyl-diphosphate Delta-isomerase from Brevibacterium linens.